A 463-amino-acid polypeptide reads, in one-letter code: Quinolone resistance protein NorB (463 aa).

14 helical membrane-spanning segments follow: residues 17–37 (IGIV…VNVV), 53–73 (IAVS…GGLA), 86–106 (IILN…LLLI), 107–127 (IGRL…LSII), 142–162 (YWSI…GAVA), 165–185 (LGWR…LFLI), 201–221 (FDIK…ILIT), 230–250 (SLLF…FIVL), 273–293 (TASN…NTFV), 299–319 (YSSL…LIMI), 334–354 (PMLI…LTFL), 357–377 (IFYV…LGIY), 403–423 (MASA…YAIV), and 435–455 (IALW…LLLV).

It belongs to the major facilitator superfamily. TCR/Tet family.

It is found in the cell membrane. In terms of biological role, multidrug efflux pump that acts independently of NorA and is one of the factors that confers resistance against diverse quinolones and chemical compounds. This Staphylococcus aureus (strain USA300) protein is Quinolone resistance protein NorB (norB).